The sequence spans 182 residues: Large ribosomal subunit protein uL5 (182 aa).

Belongs to the universal ribosomal protein uL5 family. As to quaternary structure, part of the 50S ribosomal subunit; part of the 5S rRNA/L5/L18/L25 subcomplex. Contacts the 5S rRNA and the P site tRNA. Forms a bridge to the 30S subunit in the 70S ribosome.

Its function is as follows. This is one of the proteins that bind and probably mediate the attachment of the 5S RNA into the large ribosomal subunit, where it forms part of the central protuberance. In the 70S ribosome it contacts protein S13 of the 30S subunit (bridge B1b), connecting the 2 subunits; this bridge is implicated in subunit movement. Contacts the P site tRNA; the 5S rRNA and some of its associated proteins might help stabilize positioning of ribosome-bound tRNAs. The polypeptide is Large ribosomal subunit protein uL5 (Thermosipho melanesiensis (strain DSM 12029 / CIP 104789 / BI429)).